The following is a 327-amino-acid chain: DNA polymerase III subunit delta' (327 aa).

As to quaternary structure, DNA polymerase III contains a core (composed of alpha, epsilon and theta chains) that associates with a tau subunit. This core dimerizes to form the POLIII' complex. PolIII' associates with the gamma complex (composed of gamma, delta, delta', psi and chi chains) and with the beta chain to form the complete DNA polymerase III complex.

It catalyses the reaction DNA(n) + a 2'-deoxyribonucleoside 5'-triphosphate = DNA(n+1) + diphosphate. In terms of biological role, DNA polymerase III is a complex, multichain enzyme responsible for most of the replicative synthesis in bacteria. This DNA polymerase also exhibits 3' to 5' exonuclease activity. The chain is DNA polymerase III subunit delta' (holB) from Haemophilus influenzae (strain ATCC 51907 / DSM 11121 / KW20 / Rd).